A 271-amino-acid chain; its full sequence is ATP-dependent Clp protease proteolytic subunit 6, chloroplastic (271 aa).

The interval 1–30 (MAGLAISPPLGLSFSSRTRNPKPTSFLSHN) is disordered. A chloroplast-targeting transit peptide spans 1 to 77 (MAGLAISPPL…KAPRFGVIEA (77 aa)). Residues 13 to 30 (SFSSRTRNPKPTSFLSHN) are compositionally biased toward polar residues. Ser-175 functions as the Nucleophile in the catalytic mechanism. His-200 is a catalytic residue.

This sequence belongs to the peptidase S14 family. As to quaternary structure, component of the chloroplastic Clp protease core complex which consist of at least 16 proteins: CLPP4 (3 copies), CLPP5 (3 copies), CLPR4 (2 copies), ClpP1 (1 copy), CLPP6 (1 copy), CLPR2 (1 copy), CLPT1 (1 copy), CLPT2 (1 copy) and 3 copies of CLPP3 and/or CLPR1 and/or CLPR3. The core complex is organized in two heptameric rings, one containing CLPP3,4,5,6 in a 1:2:3:1 ratio and the other CLPP1 and CLPR1,2,3,4 in a 3:1:1:1:1 ratio. In terms of tissue distribution, mostly expressed in leaves. Also detected in stems, and to a lower extent, in roots (at protein level).

The protein resides in the plastid. It localises to the chloroplast stroma. It carries out the reaction Hydrolysis of proteins to small peptides in the presence of ATP and magnesium. alpha-casein is the usual test substrate. In the absence of ATP, only oligopeptides shorter than five residues are hydrolyzed (such as succinyl-Leu-Tyr-|-NHMec, and Leu-Tyr-Leu-|-Tyr-Trp, in which cleavage of the -Tyr-|-Leu- and -Tyr-|-Trp bonds also occurs).. Functionally, cleaves peptides in various proteins in a process that requires ATP hydrolysis. Has a chymotrypsin-like activity. Plays a major role in the degradation of misfolded proteins. Essential protein required for chloroplast development and integrity. This is ATP-dependent Clp protease proteolytic subunit 6, chloroplastic from Arabidopsis thaliana (Mouse-ear cress).